A 2315-amino-acid polypeptide reads, in one-letter code: Receptor-type tyrosine-protein phosphatase zeta (2315 aa).

Positions 1 to 24 (MRILKRFLACIQLLCVCRLDWANG) are cleaved as a signal peptide. Residues 25 to 1636 (YYRQQRKLVE…LAEGLESEKK (1612 aa)) are Extracellular-facing. Positions 36 to 300 (IGWSYTGALN…KFSRQVFSSY (265 aa)) constitute an Alpha-carbonic anhydrase domain. Intrachain disulfides connect Cys56–Cys240 and Cys133–Cys264. N-linked (GlcNAc...) asparagine glycans are attached at residues Asn105, Asn134, Asn223, Asn232, Asn324, and Asn381. Positions 314-413 (EPENVQADPE…LIVDMPTDNP (100 aa)) constitute a Fibronectin type-III domain. 2 disordered regions span residues 442 to 462 (IVNPGRDSATNQIRKKEPQIS) and 477 to 507 (AKTNRSPTRGSEFSGKGDVPNTSLNSTSQPV). Polar residues predominate over residues 496–507 (PNTSLNSTSQPV). N-linked (GlcNAc...) asparagine glycosylation is found at Asn497, Asn501, and Asn552. Ser587 carries an O-linked (Xyl...) (chondroitin sulfate) serine glycan. Asn602 and Asn629 each carry an N-linked (GlcNAc...) asparagine glycan. Residues 628 to 650 (RNASEDSTSSGSEESLKDPSMEG) form a disordered region. Ser637 carries the post-translational modification Phosphoserine; alternate. Ser637 carries O-linked (Xyl...) (chondroitin sulfate) serine; alternate glycosylation. The residue at position 639 (Ser639) is a Phosphoserine. N-linked (GlcNAc...) asparagine glycosylation is present at Asn677. O-linked (Xyl...) (chondroitin sulfate) serine glycosylation is present at Ser997. N-linked (GlcNAc...) asparagine glycosylation is found at Asn1017, Asn1050, Asn1082, and Asn1122. Polar residues predominate over residues 1123-1138 (FSVQPTHTVSQASGDT). 4 disordered regions span residues 1123 to 1160 (FSVQPTHTVSQASGDTSLKPVLSANSEPASSDPASSEM), 1397 to 1523 (KATS…EEND), 1543 to 1572 (LTSDEESGSGQGTSDSLNENETSTDFSFAD), and 1584 to 1621 (AGDSEITPGFPQSPTSSVTSENSEVFHVSEAEASNSSH). Over residues 1145–1159 (SANSEPASSDPASSE) the composition is skewed to low complexity. A compositionally biased stretch (acidic residues) spans 1417–1432 (EDGDTDDDGDDDDDDR). Over residues 1450–1465 (ESQEKVMNDSDTHENS) the composition is skewed to basic and acidic residues. N-linked (GlcNAc...) asparagine glycosylation is present at Asn1457. 2 stretches are compositionally biased toward polar residues: residues 1466 to 1479 (LMDQNNPISYSLSE) and 1487 to 1513 (VTSVSSDSQTGMDRSPGKSPSANGLSQ). Ser1549 and Ser1551 each carry an O-linked (Xyl...) (chondroitin sulfate) serine glycan. Polar residues-rich tracts occupy residues 1554–1572 (GTSDSLNENETSTDFSFAD) and 1593–1606 (FPQSPTSSVTSENS). A glycan (N-linked (GlcNAc...) asparagine) is linked at Asn1562. Residue Asn1618 is glycosylated (N-linked (GlcNAc...) asparagine). The chain crosses the membrane as a helical span at residues 1637–1662 (AVIPLVIVSALTFICLVVLVGILIYW). At 1663-2315 (RKCFQTAHFY…NIAESLESLV (653 aa)) the chain is on the cytoplasmic side. Thr1684 and Thr1687 each carry phosphothreonine. 2 Tyrosine-protein phosphatase domains span residues 1717–1992 (FTEE…LVEA) and 2023–2282 (LEKQ…ILSL). Substrate contacts are provided by residues Asp1901, 1933–1939 (CSAGVGR), and Gln1977. Cys1933 acts as the Phosphocysteine intermediate in catalysis. Ser2055 carries the post-translational modification Phosphoserine.

It belongs to the protein-tyrosine phosphatase family. Receptor class 5 subfamily. As to quaternary structure, the carbonic-anhydrase like domain interacts with CNTN1 (contactin). Interacts with PTN. Interaction with PTN promotes formation of homooligomers; oligomerization impairs phosphatase activity. Interacts (via chondroitin sulfate chains) with MDK (via C-terminal); this interaction is inhibited by PTN; this interaction promotes neuronal migration. In terms of tissue distribution, specifically expressed in the central nervous system, where it is localized in the Purkinje cell layer of the cerebellum, the dentate gyrus, and the subependymal layer of the anterior horn of the lateral ventricle. Developmentally regulated in the brain.

It localises to the cell membrane. The protein localises to the secreted. It carries out the reaction O-phospho-L-tyrosyl-[protein] + H2O = L-tyrosyl-[protein] + phosphate. Protein tyrosine phosphatase that negatively regulates oligodendrocyte precursor proliferation in the embryonic spinal cord. Required for normal differentiation of the precursor cells into mature, fully myelinating oligodendrocytes. May play a role in protecting oligondendrocytes against apoptosis. May play a role in the establishment of contextual memory, probably via the dephosphorylation of proteins that are part of important signaling cascades. This chain is Receptor-type tyrosine-protein phosphatase zeta (PTPRZ1), found in Homo sapiens (Human).